A 495-amino-acid polypeptide reads, in one-letter code: Histidine--tRNA ligase (495 aa).

A compositionally biased stretch (polar residues) spans 1-10 (MTTDSEQPNT). A disordered region spans residues 1–24 (MTTDSEQPNTDFRPEARAPRGFAD). Residues 12–24 (FRPEARAPRGFAD) show a composition bias toward basic and acidic residues.

Belongs to the class-II aminoacyl-tRNA synthetase family. In terms of assembly, homodimer.

The protein localises to the cytoplasm. The enzyme catalyses tRNA(His) + L-histidine + ATP = L-histidyl-tRNA(His) + AMP + diphosphate + H(+). This is Histidine--tRNA ligase (hisS) from Caulobacter vibrioides (strain ATCC 19089 / CIP 103742 / CB 15) (Caulobacter crescentus).